A 254-amino-acid chain; its full sequence is UPF0246 protein FTF1693c (254 aa).

Belongs to the UPF0246 family.

The protein is UPF0246 protein FTF1693c of Francisella tularensis subsp. tularensis (strain FSC 198).